The sequence spans 600 residues: Malto-oligosyltrehalose trehalohydrolase (600 aa).

The tract at residues 1 to 34 (MTQTQPVTPTPPASFQTQHDPRTRLGATPLPGGA) is disordered. 273 to 278 (RLDATP) contributes to the substrate binding site. Catalysis depends on D275, which acts as the Nucleophile. E308 serves as the catalytic Proton donor. Substrate is bound by residues 328–332 (DDFHH), E376, and 399–404 (HDQIGN).

Belongs to the glycosyl hydrolase 13 family. As to quaternary structure, monomer.

The protein localises to the cytoplasm. The enzyme catalyses hydrolysis of (1-&gt;4)-alpha-D-glucosidic linkage in 4-alpha-D-[(1-&gt;4)-alpha-D-glucanosyl]n trehalose to yield trehalose and (1-&gt;4)-alpha-D-glucan.. It participates in glycan biosynthesis; trehalose biosynthesis. This is Malto-oligosyltrehalose trehalohydrolase (treZ) from Deinococcus radiodurans (strain ATCC 13939 / DSM 20539 / JCM 16871 / CCUG 27074 / LMG 4051 / NBRC 15346 / NCIMB 9279 / VKM B-1422 / R1).